The sequence spans 1322 residues: MDVFSFVKIAKLSSHRTKSSGWPPPSGTWGLSQVPPYGWEMTANRDGRDYFINHMTQAIPFDDPRLESCQIIPPAPRKVEMRRDPVLGFGFVAGSEKPVVVRSVTPGGPSEGKLIPGDQIVMINDEPVSAAPRERVIDLVRSCKESILLTVIQPYPSPKSAFISAAKKARLKSNPVKVRFSEEVIINGQVSETVKDNSLLFMPNVLKVYLENGQTKSFRFDCSTSIKDVILTLQEKLSIKGIEHFSLMLEQRTEGAGTKLLLLHEQETLTQVTQRPSSHKMRCLFRISFVPKDPIDLLRRDPVAFEYLYVQSCNDVVQERFGPELKYDIALRLAALQMYIATVTTKQTQKISLKYIEKEWGLETFLPSAVLQSMKEKNIKKALSHLVKANQNLVPPGKKLSALQAKVHYLKFLSDLRLYGGRVFKATLVQAEKRSEVTLLVGPRYGISHVINTKTNLVALLADFSHVNRIEMFSEEESLVRVELHVLDVKPITLLMESSDAMNLACLTAGYYRLLVDSRRSIFNMANKKNTATQETGPENKGKHNLLGPDWNCIPQMTTFIGEGEQEAQITYIDSKQKTVEITDSTMCPKEHRHLYIDNAYSSDGLNQQLSQPGEAPCEADYRSLAQRSLLTLSGPETLKKAQESPRGAKVSFIFGDFALDDGISPPTLGYETLLDEGPEMLEKQRNLYIGSANDMKGLDLTPEAEGIQFVENSVYANIGDVKSFQAAEGIEEPLLHDICYAENTDDAEDEDEVSCEEDLVVGEMNQPAILNLSGSSDDIIDLTSLPPPEGDDNEDDFLLRSLNMAIAAPPPGFRDSSDEEDSQSQAASFPEDKEKGSSLQNDEIPVSLIDAVPTSAEGKCEKGLDNAVVSTLGALEALSVSEEQQTSDNSGVAILRAYSPESSSDSGNETNSSEMTESSELATAQKQSENLSRMFLATHEGYHPLAEEQTEFPASKTPAGGLPPKSSHALAARPATDLPPKVVPSKQLLHSDHMEMEPETMETKSVTDYFSKLHMGSVAYSCTSKRKSKLADGEGKAPPNGNTTGKKQQGTKTAEMEEEASGKFGTVSSRDSQHLSTFNLERTAFRKDSQRWYVATEGGMAEKSGLEAATGKTFPRASGLGAREAEGKEEGAPDGETSDGSGLGQGDRFLTDVTCASSAKDLDNPEDADSSTCDHPSKLPEADESVARLCDYHLAKRMSSLQSEGHFSLQSSQGSSVDAGCGTGSSGSACATPVESPLCPSLGKHLIPDASGKGVNYIPSEERAPGLPNHGATFKELHPQTEGMCPRMTVPALHTAINTEPLFGTLRDGCHRLPKIKETTV.

The WW domain occupies 33–66; that stretch reads QVPPYGWEMTANRDGRDYFINHMTQAIPFDDPRL. A PDZ domain is found at 78–155; the sequence is KVEMRRDPVL…SILLTVIQPY (78 aa). Residues 204-519 enclose the FERM domain; the sequence is NVLKVYLENG…GYYRLLVDSR (316 aa). Disordered regions lie at residues 809-847, 900-927, 952-983, 1027-1080, 1105-1148, 1160-1180, and 1207-1227; these read APPP…EIPV, SPES…TAQK, EFPA…PPKV, RKSK…STFN, SGLE…GQGD, AKDL…PSKL, and HFSL…TGSS. The span at 902–921 shows a compositional bias: low complexity; sequence ESSSDSGNETNSSEMTESSE. Residues 1041 to 1054 show a composition bias toward low complexity; the sequence is NGNTTGKKQQGTKT. The segment covering 1067–1080 has biased composition (polar residues); the sequence is TVSSRDSQHLSTFN. The span at 1207 to 1217 shows a compositional bias: polar residues; sequence HFSLQSSQGSS.

As to quaternary structure, interacts (via C-terminus) with DLG1, DLG2, DLG3 and DLG4/PSD95. Interacts (via N-terminus) with ARHGEF7; the interaction is mediated by the PDZ domain. Interacts with GPSM2 (via TPR repeat region).

The protein resides in the cell projection. The protein localises to the dendritic spine. Its function is as follows. Positive regulator of dendritic spine morphogenesis and density. Required for the maintenance of excitatory synaptic transmission. Binds phosphatidylinositol 4,5-bisphosphate. The polypeptide is FERM and PDZ domain-containing protein 4 (FRMPD4) (Homo sapiens (Human)).